The following is a 359-amino-acid chain: Serine/threonine-protein kinase mos (359 aa).

A Protein kinase domain is found at 63–336; the sequence is VLLLEPLGSG…LLERLEQECA (274 aa). ATP contacts are provided by residues 69 to 77 and Lys-90; that span reads LGSGGFGSV. Asp-189 functions as the Proton acceptor in the catalytic mechanism.

Belongs to the protein kinase superfamily. Ser/Thr protein kinase family.

Its subcellular location is the cytoplasm. It catalyses the reaction L-seryl-[protein] + ATP = O-phospho-L-seryl-[protein] + ADP + H(+). The enzyme catalyses L-threonyl-[protein] + ATP = O-phospho-L-threonyl-[protein] + ADP + H(+). Functionally, serine/threonine kinase involved in the regulation of MAPK signaling. The polypeptide is Serine/threonine-protein kinase mos (mos) (Xenopus laevis (African clawed frog)).